A 376-amino-acid chain; its full sequence is N-acetyldiaminopimelate deacetylase (376 aa).

The active site involves Asp-69. Glu-128 functions as the Proton acceptor in the catalytic mechanism.

Belongs to the peptidase M20A family. N-acetyldiaminopimelate deacetylase subfamily.

The catalysed reaction is N-acetyl-(2S,6S)-2,6-diaminopimelate + H2O = (2S,6S)-2,6-diaminopimelate + acetate. It participates in amino-acid biosynthesis; L-lysine biosynthesis via DAP pathway; LL-2,6-diaminopimelate from (S)-tetrahydrodipicolinate (acetylase route): step 3/3. Functionally, catalyzes the conversion of N-acetyl-diaminopimelate to diaminopimelate and acetate. The polypeptide is N-acetyldiaminopimelate deacetylase (Bacillus cytotoxicus (strain DSM 22905 / CIP 110041 / 391-98 / NVH 391-98)).